The following is a 216-amino-acid chain: Ceramide-1-phosphate transfer protein (216 aa).

An N-acylsphingoid base 1-phosphate contacts are provided by Asp56, Lys60, Arg108, Arg112, and His152.

The protein belongs to the GLTP family.

It is found in the cytoplasm. The protein localises to the cytosol. The protein resides in the golgi apparatus. It localises to the trans-Golgi network membrane. Its subcellular location is the cell membrane. It is found in the endosome membrane. The protein localises to the nucleus outer membrane. The catalysed reaction is N-(hexadecanoyl)-sphing-4-enine-1-phosphate(in) = N-(hexadecanoyl)-sphing-4-enine-1-phosphate(out). It carries out the reaction N-(9Z-octadecenoyl)-sphing-4-enine-1-phosphate(in) = N-(9Z-octadecenoyl)-sphing-4-enine-1-phosphate(out). Functionally, mediates the intracellular transfer of ceramide-1-phosphate (C1P) between organelle membranes and the cell membrane. Required for normal structure of the Golgi stacks. Can bind phosphoceramides with a variety of aliphatic chains, but has a preference for lipids with saturated C16:0 or monounsaturated C18:1 aliphatic chains, and is inefficient with phosphoceramides containing lignoceryl (C24:0). Plays a role in the regulation of the cellular levels of ceramide-1-phosphate, and thereby contributes to the regulation of phospholipase PLA2G4A activity and the release of arachidonic acid. Has no activity with galactosylceramide, lactosylceramide, sphingomyelin, phosphatidylcholine, phosphatidic acid and ceramide. C1P transfer is stimulated by phosphatidylserine in C1P source vesicles. Regulates autophagy, inflammasome mediated IL1B and IL18 processing, and pyroptosis, but not apoptosis. The sequence is that of Ceramide-1-phosphate transfer protein (Cptp) from Rattus norvegicus (Rat).